A 926-amino-acid chain; its full sequence is Alpha-aminoadipic semialdehyde synthase, mitochondrial (926 aa).

The transit peptide at 1–27 (MLRVSRTKLGRLSPSLSRGLHHKAVMA) directs the protein to the mitochondrion. Residues 28–455 (LRREDVNAWE…DAVIASNGML (428 aa)) form a lysine-ketoglutarate reductase region. N6-acetyllysine is present on residues lysine 48 and lysine 56. Lysine 93 is subject to N6-acetyllysine; alternate. Lysine 93 carries the N6-succinyllysine; alternate modification. The residue at position 128 (lysine 128) is an N6-acetyllysine. Lysine 138 carries the N6-acetyllysine; alternate modification. N6-succinyllysine; alternate is present on lysine 138. Position 274 is an N6-succinyllysine (lysine 274). N6-acetyllysine; alternate is present on lysine 286. An N6-succinyllysine; alternate modification is found at lysine 286. Lysine 333 carries the post-translational modification N6-succinyllysine. An N6-acetyllysine; alternate modification is found at lysine 458. Lysine 458 is modified (N6-succinyllysine; alternate). The saccharopine dehydrogenase stretch occupies residues 477 to 926 (MGTKKKVLVL…MYTTQSTIKL (450 aa)). Serine 488, aspartate 512, and glutamine 516 together coordinate NAD(+). Lysine 523 and lysine 535 each carry N6-acetyllysine; alternate. N6-succinyllysine; alternate occurs at positions 523 and 535. NAD(+)-binding residues include leucine 554, alanine 576, and serine 577. 577-578 (SY) is an L-saccharopine binding site. At lysine 584 the chain carries N6-acetyllysine; alternate. An N6-succinyllysine; alternate modification is found at lysine 584. Leucine 603, aspartate 604, and proline 605 together coordinate NAD(+). Aspartate 604 contacts L-saccharopine. Arginine 703 contacts L-saccharopine. Lysine 707 carries the post-translational modification N6-acetyllysine. Position 724–726 (724–726 (TLR)) interacts with L-saccharopine. At lysine 732 the chain carries N6-succinyllysine. Lysine 739 is modified (N6-acetyllysine). Lysine 761 is modified (N6-acetyllysine; alternate). Lysine 761 is modified (N6-succinyllysine; alternate). Lysine 780 bears the N6-acetyllysine mark.

The protein in the N-terminal section; belongs to the AlaDH/PNT family. It in the C-terminal section; belongs to the saccharopine dehydrogenase family. Homotetramer.

It localises to the mitochondrion. It carries out the reaction L-saccharopine + NADP(+) + H2O = L-lysine + 2-oxoglutarate + NADPH + H(+). The catalysed reaction is L-saccharopine + NAD(+) + H2O = (S)-2-amino-6-oxohexanoate + L-glutamate + NADH + H(+). Its pathway is amino-acid degradation; L-lysine degradation via saccharopine pathway; glutaryl-CoA from L-lysine: step 1/6. The protein operates within amino-acid degradation; L-lysine degradation via saccharopine pathway; glutaryl-CoA from L-lysine: step 2/6. In terms of biological role, bifunctional enzyme that catalyzes the first two steps in lysine degradation. The sequence is that of Alpha-aminoadipic semialdehyde synthase, mitochondrial from Bos taurus (Bovine).